Reading from the N-terminus, the 397-residue chain is Phosphoglycerate kinase (397 aa).

Residues aspartate 21 to asparagine 23, arginine 36, histidine 59 to arginine 62, arginine 118, and arginine 151 each bind substrate. Residues lysine 201, glutamate 323, and glycine 353–threonine 356 each bind ATP.

The protein belongs to the phosphoglycerate kinase family. In terms of assembly, monomer.

It localises to the cytoplasm. It carries out the reaction (2R)-3-phosphoglycerate + ATP = (2R)-3-phospho-glyceroyl phosphate + ADP. It functions in the pathway carbohydrate degradation; glycolysis; pyruvate from D-glyceraldehyde 3-phosphate: step 2/5. The protein is Phosphoglycerate kinase of Bartonella tribocorum (strain CIP 105476 / IBS 506).